Consider the following 345-residue polypeptide: Proto-oncogene serine/threonine-protein kinase mos (345 aa).

Positions 63–344 (VCLLQRLGAG…LDLRALQAEL (282 aa)) constitute a Protein kinase domain. ATP-binding positions include 69–77 (LGAGGFGSV) and Lys-90. Residue Asp-202 is the Proton acceptor of the active site.

It belongs to the protein kinase superfamily. Ser/Thr protein kinase family. As to quaternary structure, interacts with MAP2K1/MEK1. Restricted to gonadal tissues.

The protein resides in the cytoplasm. It carries out the reaction L-seryl-[protein] + ATP = O-phospho-L-seryl-[protein] + ADP + H(+). It catalyses the reaction L-threonyl-[protein] + ATP = O-phospho-L-threonyl-[protein] + ADP + H(+). Its function is as follows. Serine/threonine kinase involved in the regulation of MAPK signaling. Is an activator of the ERK1/2 signaling cascade playing an essential role in the stimulation of oocyte maturation. The sequence is that of Proto-oncogene serine/threonine-protein kinase mos from Sus scrofa (Pig).